Consider the following 260-residue polypeptide: 2-amino-3,7-dideoxy-D-threo-hept-6-ulosonate synthase 1 (260 aa).

Asp26 serves as the catalytic Proton acceptor. Residues 26–30 (DHGIT) and 144–146 (YPR) each bind 1-deoxy-D-threo-hexo-2,5-diulose 6-phosphate. The active-site Proton donor is the Tyr144. Residue Lys172 is the Schiff-base intermediate with substrate of the active site. Residues 194–195 (GG) and 221–222 (GR) each bind 1-deoxy-D-threo-hexo-2,5-diulose 6-phosphate.

Belongs to the DeoC/FbaB aldolase family. ADHS subfamily. As to quaternary structure, homodecamer.

The catalysed reaction is 1-deoxy-D-threo-hexo-2,5-diulose 6-phosphate + L-aspartate 4-semialdehyde = 2,3-dioxopropyl phosphate + 2-amino-2,3,7-trideoxy-D-lyxo-hept-6-ulosonate. Functionally, catalyzes a transaldol reaction between 6-deoxy-5-ketofructose 1-phosphate (DKFP) and L-aspartate semialdehyde (ASA) with an elimination of hydroxypyruvaldehyde phosphate to yield 2-amino-3,7-dideoxy-D-threo-hept-6-ulosonate (ADH). Plays a key role in an alternative pathway of the biosynthesis of 3-dehydroquinate (DHQ), which is involved in the canonical pathway for the biosynthesis of aromatic amino acids. This chain is 2-amino-3,7-dideoxy-D-threo-hept-6-ulosonate synthase 1, found in Archaeoglobus fulgidus (strain ATCC 49558 / DSM 4304 / JCM 9628 / NBRC 100126 / VC-16).